We begin with the raw amino-acid sequence, 55 residues long: Large ribosomal subunit protein bL33 (55 aa).

It belongs to the bacterial ribosomal protein bL33 family.

This Sphingopyxis alaskensis (strain DSM 13593 / LMG 18877 / RB2256) (Sphingomonas alaskensis) protein is Large ribosomal subunit protein bL33.